A 200-amino-acid polypeptide reads, in one-letter code: TATA-box-binding protein 1 (200 aa).

At T2 the chain carries N-acetylthreonine. 2 consecutive repeat copies span residues 25 to 101 and 115 to 192.

This sequence belongs to the TBP family. In terms of assembly, belongs to the TFIID complex together with the TBP-associated factors (TAFs). Binds DNA as monomer. Interacts with TAF1 (via N-terminus). Interacts with MEE12/CCG1. Associates with PWP2 in the nucleus. Component of a nuclear protein complex containing at least TATA binding proteins (TBPs, e.g. TBP1 and TBP2) and ATX1.

Its subcellular location is the nucleus. Its function is as follows. General transcription factor that functions at the core of the DNA-binding multiprotein factor TFIID. Binding of TFIID to the TATA box is the initial transcriptional step of the pre-initiation complex (PIC), playing a role in the activation of eukaryotic genes transcribed by RNA polymerase II. This Arabidopsis thaliana (Mouse-ear cress) protein is TATA-box-binding protein 1.